Here is a 443-residue protein sequence, read N- to C-terminus: Tol-Pal system protein TolB (443 aa).

A signal peptide spans 1 to 33; the sequence is MKIGIINTKIRTVFSAFACMIAASLVCTMPARA.

It belongs to the TolB family. The Tol-Pal system is composed of five core proteins: the inner membrane proteins TolA, TolQ and TolR, the periplasmic protein TolB and the outer membrane protein Pal. They form a network linking the inner and outer membranes and the peptidoglycan layer.

It is found in the periplasm. Its function is as follows. Part of the Tol-Pal system, which plays a role in outer membrane invagination during cell division and is important for maintaining outer membrane integrity. This Brucella canis (strain ATCC 23365 / NCTC 10854 / RM-666) protein is Tol-Pal system protein TolB.